The sequence spans 222 residues: Cysteine protease inhibitor 9 (222 aa).

Residues 1-26 form the signal peptide; sequence MKSINILSFLLLSSTLSLVAFARSFS. The propeptide occupies 27–42; it reads SENPIVLPSTCHDDDN. Positions 29-34 match the Vacuolar targeting signal motif; that stretch reads NPIVLP. 2 disulfide bridges follow: Cys84-Cys136 and Cys185-Cys191.

The protein belongs to the protease inhibitor I3 (leguminous Kunitz-type inhibitor) family. As to expression, tuber.

Its subcellular location is the vacuole. In terms of biological role, putative inhibitor of cysteine proteases. Does not inhibit papain. May protect the plant by inhibiting proteases of invading organisms. This Solanum tuberosum (Potato) protein is Cysteine protease inhibitor 9.